The following is a 350-amino-acid chain: MEERENSEEGDDGAGEEEEEDQGSGEDGGEVGAEREQEAELKDSLRPSVLDLQLALARLCEDEYQDQPSKMPVLGLQIKDHQFERSFSGNGKVPSPGKIVNELFKEAKEHGAIPIDDTSKSSGAFYRARTFTGRGYKLGDSSKREFEYMQGEDPFEQGQEIQILLKLWSNGFSLDDGELRSYSDPINAEFLESVKKGEIPVELQRLVHGGQVNLDMEDHQDQEYIKPRLKFKAFSGEGKKLGSVTPEIISTPSSPEEEHKRFLNAEVDLDEHVPTTKIQIRLADGTRLIQRFNLSHRIMDVRQFIIHARSDFAQCDFALLTTFPNVELTDETQTLEEADILNTVILQRLK.

Positions 1 to 29 (MEERENSEEGDDGAGEEEEEDQGSGEDGG) are enriched in acidic residues. Residues 1–46 (MEERENSEEGDDGAGEEEEEDQGSGEDGGEVGAEREQEAELKDSLR) form a disordered region. Over residues 32–45 (GAEREQEAELKDSL) the composition is skewed to basic and acidic residues. In terms of domain architecture, SEP spans 160-225 (EIQILLKLWS…MEDHQDQEYI (66 aa)). One can recognise a UBX domain in the interval 271–348 (EHVPTTKIQI…DILNTVILQR (78 aa)).

The protein belongs to the NSFL1C family.

The protein resides in the nucleus. It localises to the cytoplasm. It is found in the cytosol. The protein localises to the endoplasmic reticulum. Its subcellular location is the golgi apparatus. The protein resides in the cytoskeleton. It localises to the microtubule organizing center. It is found in the centrosome. In terms of biological role, adapter protein required for Golgi and endoplasmic reticulum biogenesis. Involved in Golgi and endoplasmic reticulum maintenance during interphase and in their reassembly at the end of mitosis. Regulates the centrosomal levels of kinase aurka-a/Aurora A during mitotic progression by promoting aurka-a removal from centrosomes in prophase. Also, regulates spindle orientation during mitosis. This Xenopus laevis (African clawed frog) protein is UBX domain-containing protein 2B (ubxn2b).